Here is a 351-residue protein sequence, read N- to C-terminus: Epoxyqueuosine reductase (351 aa).

D131 functions as the Proton donor in the catalytic mechanism. A 4Fe-4S ferredoxin-type domain is found at 177–205 (EDQPVDYGCGSCTRCVDFCPTKALLGDGR). The [4Fe-4S] cluster site is built by C185, C188, C191, C195, C211, C237, C240, and C244.

Belongs to the QueG family. In terms of assembly, monomer. Cob(II)alamin is required as a cofactor. [4Fe-4S] cluster serves as cofactor.

Its subcellular location is the cytoplasm. It carries out the reaction epoxyqueuosine(34) in tRNA + AH2 = queuosine(34) in tRNA + A + H2O. It participates in tRNA modification; tRNA-queuosine biosynthesis. Its function is as follows. Catalyzes the conversion of epoxyqueuosine (oQ) to queuosine (Q), which is a hypermodified base found in the wobble positions of tRNA(Asp), tRNA(Asn), tRNA(His) and tRNA(Tyr). The chain is Epoxyqueuosine reductase from Lactococcus garvieae (strain Lg2) (Enterococcus seriolicida).